Here is a 904-residue protein sequence, read N- to C-terminus: Alanine--tRNA ligase (904 aa).

Positions 600, 604, 704, and 708 each coordinate Zn(2+).

This sequence belongs to the class-II aminoacyl-tRNA synthetase family. Requires Zn(2+) as cofactor.

It localises to the cytoplasm. The catalysed reaction is tRNA(Ala) + L-alanine + ATP = L-alanyl-tRNA(Ala) + AMP + diphosphate. Its function is as follows. Catalyzes the attachment of alanine to tRNA(Ala) in a two-step reaction: alanine is first activated by ATP to form Ala-AMP and then transferred to the acceptor end of tRNA(Ala). Also edits incorrectly charged Ser-tRNA(Ala) and Gly-tRNA(Ala) via its editing domain. The protein is Alanine--tRNA ligase of Metallosphaera sedula (strain ATCC 51363 / DSM 5348 / JCM 9185 / NBRC 15509 / TH2).